A 542-amino-acid polypeptide reads, in one-letter code: 4-coumarate--CoA ligase 2 (542 aa).

6 residues coordinate ATP: S189, S190, G191, T192, T193, and K197. Y239 and S243 together coordinate (E)-4-coumaroyl-AMP. Positions 239 and 243 each coordinate (E)-caffeoyl-AMP. (E)-feruloyl-AMP is bound by residues Y239 and S243. K260 is a CoA binding site. The tract at residues 262 to 331 is SBD1; sequence DIVSFLELIQ…AKFPNAKLGQ (70 aa). A309 contacts (E)-4-coumaroyl-AMP. Position 309 (A309) interacts with (E)-caffeoyl-AMP. A309 is a (E)-feruloyl-AMP binding site. ATP-binding residues include Q331, G332, and T336. (E)-4-coumaroyl-AMP is bound by residues G332, T336, M344, D420, R435, K437, and K441. (E)-caffeoyl-AMP is bound by residues G332, T336, M344, D420, R435, K437, and K441. Residues G332, T336, M344, D420, R435, K437, and K441 each coordinate (E)-feruloyl-AMP. G332 and T336 together coordinate AMP. The tract at residues 332-399 is SBD2; the sequence is GYGMTEAGPV…IRGDQIMKGY (68 aa). Positions 420 and 435 each coordinate ATP. D420 is an AMP binding site. 2 residues coordinate AMP: K437 and K441. K443 and G444 together coordinate CoA. Residue Q446 coordinates AMP. Residue K526 coordinates ATP.

Belongs to the ATP-dependent AMP-binding enzyme family. Mg(2+) is required as a cofactor. Mainly expressed in old stems and, to a lower extent, in flowers (e.g. in ovary), leaves, young stems, shoot tips and patel limbs.

The catalysed reaction is (E)-4-coumarate + ATP + CoA = (E)-4-coumaroyl-CoA + AMP + diphosphate. It catalyses the reaction (E)-caffeate + ATP + CoA = (E)-caffeoyl-CoA + AMP + diphosphate. The enzyme catalyses (E)-ferulate + ATP + CoA = (E)-feruloyl-CoA + AMP + diphosphate. It carries out the reaction (E)-cinnamate + ATP + CoA = (E)-cinnamoyl-CoA + AMP + diphosphate. The catalysed reaction is (E)-4-coumarate + ATP + H(+) = (E)-4-coumaroyl-AMP + diphosphate. It catalyses the reaction (E)-4-coumaroyl-AMP + CoA = (E)-4-coumaroyl-CoA + AMP + H(+). The enzyme catalyses (E)-caffeate + ATP + H(+) = (E)-caffeoyl-AMP + diphosphate. It carries out the reaction (E)-caffeoyl-AMP + CoA = (E)-caffeoyl-CoA + AMP + H(+). The catalysed reaction is (E)-ferulate + ATP + H(+) = (E)-feruloyl-AMP + diphosphate. It catalyses the reaction (E)-feruloyl-AMP + CoA = (E)-feruloyl-CoA + AMP + H(+). The protein operates within phytoalexin biosynthesis; 3,4',5-trihydroxystilbene biosynthesis; 3,4',5-trihydroxystilbene from trans-4-coumarate: step 1/2. Major enzyme of the phenylpropanoid pathway that mediates the production of several precursors for numerous metabolites and regulates carbon flow. Catalyzes the formation of CoA thioesters using 4-coumarate, ferulate, caffeate, and cinnamate as substrates. Follows a two-step reaction mechanism, wherein a (hydroxy)cinnamate substrate first undergoes adenylation by ATP leading to an acyl-AMP, followed by a thioesterification in the presence of CoA to yield the final (hydroxy)cinnamoyl-CoA product. Almost inactive toward sinapate. In Nicotiana tabacum (Common tobacco), this protein is 4-coumarate--CoA ligase 2.